Here is a 197-residue protein sequence, read N- to C-terminus: 3-isopropylmalate dehydratase small subunit (197 aa).

The protein belongs to the LeuD family. LeuD type 1 subfamily. Heterodimer of LeuC and LeuD.

The catalysed reaction is (2R,3S)-3-isopropylmalate = (2S)-2-isopropylmalate. The protein operates within amino-acid biosynthesis; L-leucine biosynthesis; L-leucine from 3-methyl-2-oxobutanoate: step 2/4. Catalyzes the isomerization between 2-isopropylmalate and 3-isopropylmalate, via the formation of 2-isopropylmaleate. This is 3-isopropylmalate dehydratase small subunit from Acidothermus cellulolyticus (strain ATCC 43068 / DSM 8971 / 11B).